We begin with the raw amino-acid sequence, 138 residues long: Ribosomal RNA large subunit methyltransferase H (138 aa).

Residues Leu57, Gly86, and Leu105–Phe110 contribute to the S-adenosyl-L-methionine site.

It belongs to the RNA methyltransferase RlmH family. Homodimer.

It is found in the cytoplasm. It carries out the reaction pseudouridine(1915) in 23S rRNA + S-adenosyl-L-methionine = N(3)-methylpseudouridine(1915) in 23S rRNA + S-adenosyl-L-homocysteine + H(+). In terms of biological role, specifically methylates the pseudouridine at position 1915 (m3Psi1915) in 23S rRNA. In Prochlorococcus marinus (strain MIT 9312), this protein is Ribosomal RNA large subunit methyltransferase H.